The primary structure comprises 97 residues: Defensin alpha 4 (97 aa).

An N-terminal signal peptide occupies residues 1–19 (MRIIAILAAILLVALQVRA). Positions 20 to 63 (GPLQARGDEAPGQEQRGPEDQDISISFAWDKSSALQVSGSTRGM) are excised as a propeptide. Intrachain disulfides connect C65–C93, C67–C82, and C72–C92. Residue D97 is a propeptide.

This sequence belongs to the alpha-defensin family. Homodimer; homodimerization seems to be required for killing S.aureus, but not E.coli. Interacts with CD4. Interacts with Bacillus anthracis lef; homodimerization is required for the interaction. Post-translationally, the three-dimensional structure formed by the three intramolecular disulfide bridges is indispensable for effective bacterial killing.

The protein resides in the secreted. It localises to the cytoplasmic vesicle. The protein localises to the secretory vesicle. Its function is as follows. Host-defense peptide that has antimicrobial activity against Gram-negative bacteria, and to a lesser extent also against Gram-positive bacteria and fungi. Exhibits antimicrobial activity against Gram-negative E.coli and E.aerogenes and Gram-positive S.faecalis, S.aureus and B.cereus and the yeast C.albicans (in vitro). Inhibits corticotropin (ACTH)-stimulated corticosterone production (in vitro). Inhibits enzymatic activity of B.anthracis lef/anthrax lethal factor (in vitro). This chain is Defensin alpha 4 (DEFA4), found in Pan troglodytes (Chimpanzee).